We begin with the raw amino-acid sequence, 475 residues long: Ubiquilin-like protein (475 aa).

In terms of domain architecture, Ubiquitin-like spans 31-105 (TRVIVKTAGN…IYLVIKSKQG (75 aa)). Disordered stretches follow at residues 113–138 (FRDL…VHQP) and 305–325 (QVQS…QLTQ). Residues 129-138 (KGNSSRVHQP) show a composition bias toward polar residues.

The chain is Ubiquilin-like protein (UBQLNL) from Homo sapiens (Human).